Here is a 160-residue protein sequence, read N- to C-terminus: SsrA-binding protein (160 aa).

It belongs to the SmpB family.

The protein resides in the cytoplasm. Required for rescue of stalled ribosomes mediated by trans-translation. Binds to transfer-messenger RNA (tmRNA), required for stable association of tmRNA with ribosomes. tmRNA and SmpB together mimic tRNA shape, replacing the anticodon stem-loop with SmpB. tmRNA is encoded by the ssrA gene; the 2 termini fold to resemble tRNA(Ala) and it encodes a 'tag peptide', a short internal open reading frame. During trans-translation Ala-aminoacylated tmRNA acts like a tRNA, entering the A-site of stalled ribosomes, displacing the stalled mRNA. The ribosome then switches to translate the ORF on the tmRNA; the nascent peptide is terminated with the 'tag peptide' encoded by the tmRNA and targeted for degradation. The ribosome is freed to recommence translation, which seems to be the essential function of trans-translation. The chain is SsrA-binding protein from Pectobacterium atrosepticum (strain SCRI 1043 / ATCC BAA-672) (Erwinia carotovora subsp. atroseptica).